The chain runs to 45 residues: Osteocalcin (45 aa).

The 41-residue stretch at 1–41 folds into the Gla domain; it reads AAGELTLTQLESLREVCEANLACEDMMDAQGIIAAYTAYYG. 4 residues coordinate Ca(2+): E11, E15, E18, and E24. A 4-carboxyglutamate mark is found at E11, E15, and E18. The cysteines at positions 17 and 23 are disulfide-linked.

Belongs to the osteocalcin/matrix Gla protein family. Gamma-carboxyglutamate residues are formed by vitamin K dependent carboxylation by GGCX. These residues are essential for the binding of calcium. Also found in smaller quantities in dentin.

It localises to the secreted. The carboxylated form is one of the main organic components of the bone matrix, which constitutes 1-2% of the total bone protein. The carboxylated form binds strongly to apatite and calcium. The protein is Osteocalcin (bglap) of Lepomis macrochirus (Bluegill).